The sequence spans 359 residues: MPSLLLLFTAALLSSWAQLLTDANSWWSLALNPVQRPEMFIIGAQPVCSQLPGLSPGQRKLCQLYQEHMAYIGEGAKTGIKECQHQFRQRRWNCSTVDNASVFGRVMQIGSRETAFTYAVSAAGVVNAISRACREGELSTCGCSRTARPKDLPRDWLWGGCGDNVEYGYRFAKEFVDAREREKNFAKGSEEQGRVLMNLQNNEAGRRAVYKMADVACKCHGVSGSCSLKTCWLQLAEFRKVGDRLKEKYDSAAAMRVTRKGRLELVNSRFTQPTPEDLVYVDPSPDYCLRNESTGSLGTQGRLCNKTSEGMDGCELMCCGRGYNQFKSVQVERCHCKFHWCCFVKCKKCTEIVDQYICK.

The N-terminal stretch at 1 to 17 (MPSLLLLFTAALLSSWA) is a signal peptide. A disulfide bond links Cys-83 and Cys-94. N-linked (GlcNAc...) asparagine glycosylation is found at Asn-93 and Asn-99. Cystine bridges form between Cys-133–Cys-141, Cys-143–Cys-161, Cys-217–Cys-231, Cys-219–Cys-226, Cys-288–Cys-319, Cys-304–Cys-314, Cys-318–Cys-358, Cys-334–Cys-349, Cys-336–Cys-346, and Cys-341–Cys-342. The O-palmitoleoyl serine; by PORCN moiety is linked to residue Ser-223. Asn-291 and Asn-305 each carry an N-linked (GlcNAc...) asparagine glycan.

The protein belongs to the Wnt family. As to quaternary structure, interacts with PORCN. Post-translationally, palmitoleoylation is required for efficient binding to frizzled receptors. Depalmitoleoylation leads to Wnt signaling pathway inhibition.

The protein localises to the secreted. It is found in the extracellular space. It localises to the extracellular matrix. In terms of biological role, ligand for members of the frizzled family of seven transmembrane receptors. Probable developmental protein. May be a signaling molecule which affects the development of discrete regions of tissues. Is likely to signal over only few cell diameters. The protein is Protein Wnt-5b (WNT5B) of Pongo abelii (Sumatran orangutan).